Here is a 391-residue protein sequence, read N- to C-terminus: tRNA (cytosine(38)-C(5))-methyltransferase (391 aa).

The region spanning leucine 4–glutamate 391 is the SAM-dependent MTase C5-type domain. S-adenosyl-L-methionine is bound by residues isoleucine 13–glycine 15, aspartate 34, isoleucine 57–glutamate 58, and serine 76. Residue cysteine 79 is part of the active site. Serine 376 provides a ligand contact to S-adenosyl-L-methionine.

Belongs to the class I-like SAM-binding methyltransferase superfamily. C5-methyltransferase family.

The protein resides in the cytoplasm. The catalysed reaction is cytidine(38) in tRNA + S-adenosyl-L-methionine = 5-methylcytidine(38) in tRNA + S-adenosyl-L-homocysteine + H(+). In terms of biological role, specifically methylates cytosine 38 in the anticodon loop of tRNA(Asp). Has higher activity on tRNA(Asp) modified with queuosine at position 34. The sequence is that of tRNA (cytosine(38)-C(5))-methyltransferase (Trdmt1) from Rattus norvegicus (Rat).